The sequence spans 203 residues: MSAIAPGMIFLAYLCGSISSAILVCRIAGLPDPRVSGSGNPGATNVLRIGGKRAAVAVLVFDVLKGMLPVWGAYMLGVTPFWLGLIAIAACVGHIWPVFFHFKGGKGVATAFGAIAPIGWDLTGVMAGTWLLSVLLSGYSSLGAIVSALIAPFYVWWFKPQFTFPVSMLSCLILLRHHDNIQRLWRRQETKIWTKLKKKKAPK.

Transmembrane regions (helical) follow at residues 4–24 (IAPGMIFLAYLCGSISSAILV), 56–76 (VAVLVFDVLKGMLPVWGAYML), 80–100 (PFWLGLIAIAACVGHIWPVFF), 112–132 (FGAIAPIGWDLTGVMAGTWLL), and 138–158 (GYSSLGAIVSALIAPFYVWWF).

It belongs to the PlsY family. Probably interacts with PlsX.

It localises to the cell inner membrane. It catalyses the reaction an acyl phosphate + sn-glycerol 3-phosphate = a 1-acyl-sn-glycero-3-phosphate + phosphate. It participates in lipid metabolism; phospholipid metabolism. In terms of biological role, catalyzes the transfer of an acyl group from acyl-phosphate (acyl-PO(4)) to glycerol-3-phosphate (G3P) to form lysophosphatidic acid (LPA). This enzyme utilizes acyl-phosphate as fatty acyl donor, but not acyl-CoA or acyl-ACP. In Enterobacter sp. (strain 638), this protein is Glycerol-3-phosphate acyltransferase.